The primary structure comprises 337 residues: MIQQAIAKLLEGEDLTRAEAALVMTEIADGGATPAQSGAFLAALRMKGETVDEIAGAADVMRQRADRVRVDRDVFIDTCGTGGDGRHTFNISTTAAFVAAGAGVCVAKHGNRAVSSRSGSADVLAALGVNVDADKETVERCIEEVGIGFLFAVRLHPAFKAIAGVRRELGVRTIFNLLGPLANPAGARHQVLGVYEARWVPVLGGVLAALGAAHAFVVHGEGLDEIAVTGMTHVCEVRDGQVERYTIRPEDLGLPRRDAAELVGGDAVANARIVTDVLEGQAGGPRDAVLANAAAALVCAGAAKDLRDGVARAARSIDSGAAREKLRQLVAATTVPA.

5-phospho-alpha-D-ribose 1-diphosphate contacts are provided by residues Gly-80, Gly-83 to Asp-84, Thr-88, Asn-90 to Thr-93, Lys-108 to Ser-116, and Ser-120. Gly-80 is an anthranilate binding site. Ser-92 provides a ligand contact to Mg(2+). Anthranilate is bound at residue Asn-111. Arg-166 contacts anthranilate. Mg(2+)-binding residues include Asp-224 and Glu-225.

It belongs to the anthranilate phosphoribosyltransferase family. Homodimer. Requires Mg(2+) as cofactor.

It catalyses the reaction N-(5-phospho-beta-D-ribosyl)anthranilate + diphosphate = 5-phospho-alpha-D-ribose 1-diphosphate + anthranilate. It functions in the pathway amino-acid biosynthesis; L-tryptophan biosynthesis; L-tryptophan from chorismate: step 2/5. In terms of biological role, catalyzes the transfer of the phosphoribosyl group of 5-phosphorylribose-1-pyrophosphate (PRPP) to anthranilate to yield N-(5'-phosphoribosyl)-anthranilate (PRA). The chain is Anthranilate phosphoribosyltransferase from Anaeromyxobacter dehalogenans (strain 2CP-1 / ATCC BAA-258).